Consider the following 334-residue polypeptide: Aspartate carbamoyltransferase catalytic subunit (334 aa).

Residues R71 and T72 each coordinate carbamoyl phosphate. K99 is a binding site for L-aspartate. Residues R121, H151, and Q154 each contribute to the carbamoyl phosphate site. The L-aspartate site is built by R184 and R239. Carbamoyl phosphate is bound by residues G280 and P281.

It belongs to the aspartate/ornithine carbamoyltransferase superfamily. ATCase family. As to quaternary structure, heterododecamer (2C3:3R2) of six catalytic PyrB chains organized as two trimers (C3), and six regulatory PyrI chains organized as three dimers (R2).

It catalyses the reaction carbamoyl phosphate + L-aspartate = N-carbamoyl-L-aspartate + phosphate + H(+). Its pathway is pyrimidine metabolism; UMP biosynthesis via de novo pathway; (S)-dihydroorotate from bicarbonate: step 2/3. Catalyzes the condensation of carbamoyl phosphate and aspartate to form carbamoyl aspartate and inorganic phosphate, the committed step in the de novo pyrimidine nucleotide biosynthesis pathway. In Pseudomonas fluorescens (strain Pf0-1), this protein is Aspartate carbamoyltransferase catalytic subunit.